Reading from the N-terminus, the 486-residue chain is ATP synthase subunit beta (486 aa).

167-174 is a binding site for ATP; that stretch reads GGAGVGKT.

Belongs to the ATPase alpha/beta chains family. As to quaternary structure, F-type ATPases have 2 components, CF(1) - the catalytic core - and CF(0) - the membrane proton channel. CF(1) has five subunits: alpha(3), beta(3), gamma(1), delta(1), epsilon(1). CF(0) has three main subunits: a(1), b(2) and c(9-12). The alpha and beta chains form an alternating ring which encloses part of the gamma chain. CF(1) is attached to CF(0) by a central stalk formed by the gamma and epsilon chains, while a peripheral stalk is formed by the delta and b chains.

It is found in the cell inner membrane. It carries out the reaction ATP + H2O + 4 H(+)(in) = ADP + phosphate + 5 H(+)(out). Functionally, produces ATP from ADP in the presence of a proton gradient across the membrane. The catalytic sites are hosted primarily by the beta subunits. In Anaplasma marginale (strain St. Maries), this protein is ATP synthase subunit beta.